The following is a 156-amino-acid chain: MSRKNRAPKRDVLPDPLYNSQLVTRLINRVMLDGKRGTAASIVYGAFEQIKEATGNDALEVFETAMENIMPVLEVRARRVGGSNYQVPVKVRPERRTTLGLRWLVTIARLRGEHTMQDRLAKEILDAANNTGAAVKKREDTHRMAEANRAFAHFRW.

It belongs to the universal ribosomal protein uS7 family. As to quaternary structure, part of the 30S ribosomal subunit. Contacts proteins S9 and S11.

In terms of biological role, one of the primary rRNA binding proteins, it binds directly to 16S rRNA where it nucleates assembly of the head domain of the 30S subunit. Is located at the subunit interface close to the decoding center, probably blocks exit of the E-site tRNA. The polypeptide is Small ribosomal subunit protein uS7 (Streptococcus pneumoniae serotype 4 (strain ATCC BAA-334 / TIGR4)).